Reading from the N-terminus, the 320-residue chain is MAIGEQQVIVIGAGVSGLTSAICLAEAGWPVRVWAAALPQQTTSAVAGAVWGPRPKEPVAKVRGWIEQSLHVFRDLAKDPATGVRMTPALSVGDRIETGAMPPGLELIPDVRPADPADVPGGFRAGFHATLPMIDMPQYLDCLTQRLAATGCEIETRPLRSLAEAAEAAPIVINCAGLGARELAGDATVWPRFGQHVVLTNPGLEQLFIERTGGSEWICYFAHPQRVVCGGISIPGRWDPTPEPEITERILQRCRRIQPRLAEAAVIETITGLRPDRPSVRVEAEPIGRALCIHNYGHGGDGVTLSWGCAREVVNLVGGG.

FAD contacts are provided by A13, G14, V15, T42, T43, S44, G48, and A49. Residues Y220 and R274 each contribute to the D-proline site. Y220 and R274 together coordinate D-serine. The FAD site is built by R274, G299, G300, G302, and T304. D-proline is bound at residue G300. G300 provides a ligand contact to D-serine.

It belongs to the DAMOX/DASOX family. FAD serves as cofactor.

It localises to the cytoplasm. Its subcellular location is the secreted. It is found in the cell wall. The catalysed reaction is a D-alpha-amino acid + O2 + H2O = a 2-oxocarboxylate + H2O2 + NH4(+). Functionally, catalyzes the oxidative deamination of D-amino acids with broad substrate specificity. Enables the organism to utilize D-amino acids as a source of nutrients. Enables the organism to utilize glycine as a carbon source. In Mycobacterium tuberculosis (strain ATCC 25177 / H37Ra), this protein is D-amino-acid oxidase.